A 565-amino-acid polypeptide reads, in one-letter code: NAD-dependent malic enzyme (565 aa).

Residue Tyr104 is the Proton donor of the active site. NAD(+) is bound at residue Arg157. Residue Lys175 is the Proton acceptor of the active site. The a divalent metal cation site is built by Glu246, Asp247, and Asp270. 2 residues coordinate NAD(+): Asp270 and Asn418.

This sequence belongs to the malic enzymes family. As to quaternary structure, homotetramer. Requires Mg(2+) as cofactor. Mn(2+) serves as cofactor.

The catalysed reaction is (S)-malate + NAD(+) = pyruvate + CO2 + NADH. It carries out the reaction oxaloacetate + H(+) = pyruvate + CO2. The chain is NAD-dependent malic enzyme from Shigella sonnei (strain Ss046).